A 1029-amino-acid polypeptide reads, in one-letter code: Cilia- and flagella-associated protein 91 (1029 aa).

Disordered stretches follow at residues asparagine 72 to arginine 97 and proline 117 to proline 170. Positions leucine 272–glutamate 299 form a coiled coil. Over residues glutamate 837–serine 854 the composition is skewed to low complexity. Disordered stretches follow at residues glutamate 837 to aspartate 861 and glycine 876 to glutamate 1029. Positions glutamine 890–alanine 910 are enriched in acidic residues. Residues glutamate 911–glutamate 921 show a composition bias toward low complexity. A compositionally biased stretch (acidic residues) spans alanine 922–alanine 932. Low complexity predominate over residues glutamate 933–alanine 944. A compositionally biased stretch (acidic residues) spans proline 964–alanine 982. Residues alanine 984–glutamate 999 are compositionally biased toward basic and acidic residues. The segment covering glycine 1000–leucine 1015 has biased composition (gly residues). The segment covering alanine 1016 to glutamate 1029 has biased composition (acidic residues).

This sequence belongs to the CFAP91 family. Identified in a spoke-associated complex containing CFAP61, CFAP91 and CFAP251; the complex is associated with the radial spokes of the axoneme. The complex associates with Calmodulin; the association is calcium sensitive. Interacts with RSP3.

It is found in the cytoplasm. The protein localises to the cytoskeleton. The protein resides in the flagellum axoneme. Its function is as follows. As component of a spoke-associated complex, regulates flagellar dynein activity by mediating regulatory signals between the radial spokes and dynein arms. The sequence is that of Cilia- and flagella-associated protein 91 from Chlamydomonas reinhardtii (Chlamydomonas smithii).